The following is a 384-amino-acid chain: Cyclin-J (384 aa).

The region spanning 15-143 (DIHQTLRYKE…LLETFEWNLC (129 aa)) is the Cyclin N-terminal domain.

It belongs to the cyclin family. Cyclin J subfamily.

The protein is Cyclin-J (ccnj) of Xenopus laevis (African clawed frog).